A 327-amino-acid chain; its full sequence is Acetyl-coenzyme A carboxylase carboxyl transferase subunit beta (327 aa).

The CoA carboxyltransferase N-terminal domain maps to 24-293 (LWIKCPDTGQ…LTVTTAVEAP (270 aa)). The span at 293–311 (PAEAAAKAEPEATTTEQPG) shows a compositional bias: low complexity. The disordered stretch occupies residues 293–327 (PAEAAAKAEPEATTTEQPGAPAPTEPPAQPAAPQA). The segment covering 312-327 (APAPTEPPAQPAAPQA) has biased composition (pro residues).

Belongs to the AccD/PCCB family. Acetyl-CoA carboxylase is a heterohexamer composed of biotin carboxyl carrier protein (AccB), biotin carboxylase (AccC) and two subunits each of ACCase subunit alpha (AccA) and ACCase subunit beta (AccD).

The protein localises to the cytoplasm. The enzyme catalyses N(6)-carboxybiotinyl-L-lysyl-[protein] + acetyl-CoA = N(6)-biotinyl-L-lysyl-[protein] + malonyl-CoA. It functions in the pathway lipid metabolism; malonyl-CoA biosynthesis; malonyl-CoA from acetyl-CoA: step 1/1. In terms of biological role, component of the acetyl coenzyme A carboxylase (ACC) complex. Biotin carboxylase (BC) catalyzes the carboxylation of biotin on its carrier protein (BCCP) and then the CO(2) group is transferred by the transcarboxylase to acetyl-CoA to form malonyl-CoA. The sequence is that of Acetyl-coenzyme A carboxylase carboxyl transferase subunit beta from Rhodopseudomonas palustris (strain ATCC BAA-98 / CGA009).